Reading from the N-terminus, the 245-residue chain is Ribosomal RNA large subunit methyltransferase E (245 aa).

S-adenosyl-L-methionine is bound by residues G83, W85, D111, D127, and D156. K196 acts as the Proton acceptor in catalysis.

It belongs to the class I-like SAM-binding methyltransferase superfamily. RNA methyltransferase RlmE family.

It is found in the cytoplasm. The enzyme catalyses uridine(2552) in 23S rRNA + S-adenosyl-L-methionine = 2'-O-methyluridine(2552) in 23S rRNA + S-adenosyl-L-homocysteine + H(+). Functionally, specifically methylates the uridine in position 2552 of 23S rRNA at the 2'-O position of the ribose in the fully assembled 50S ribosomal subunit. The polypeptide is Ribosomal RNA large subunit methyltransferase E (Polaromonas naphthalenivorans (strain CJ2)).